Consider the following 227-residue polypeptide: 7-cyano-7-deazaguanine synthase (227 aa).

An ATP-binding site is contributed by valine 8–leucine 18. Zn(2+) contacts are provided by cysteine 192, cysteine 202, cysteine 205, and cysteine 208.

The protein belongs to the QueC family. Requires Zn(2+) as cofactor.

It catalyses the reaction 7-carboxy-7-deazaguanine + NH4(+) + ATP = 7-cyano-7-deazaguanine + ADP + phosphate + H2O + H(+). It functions in the pathway purine metabolism; 7-cyano-7-deazaguanine biosynthesis. In terms of biological role, catalyzes the ATP-dependent conversion of 7-carboxy-7-deazaguanine (CDG) to 7-cyano-7-deazaguanine (preQ(0)). The chain is 7-cyano-7-deazaguanine synthase from Rickettsia akari (strain Hartford).